Here is a 382-residue protein sequence, read N- to C-terminus: uncharacterized protein (382 aa).

The next 12 membrane-spanning stretches (helical) occupy residues 8–28, 45–65, 75–95, 102–122, 131–151, 157–177, 204–224, 231–251, 270–290, 291–311, 325–345, and 349–369; these read VMLL…LNTL, MVSS…GYLI, YLAS…VGFW, FIAG…LMCS, LLAA…LLVS, LLHV…PLLF, LGVN…GLMP, GMAN…GILG, VQVF…AMAP, ALFI…AWAC, ALLL…AMLM, and SDNL…LMLL.

Belongs to the major facilitator superfamily. YcaD (TC 2.A.1.26) family.

It localises to the cell inner membrane. This is an uncharacterized protein from Salmonella paratyphi B (strain ATCC BAA-1250 / SPB7).